Consider the following 620-residue polypeptide: LEAF RUST 10 DISEASE-RESISTANCE LOCUS RECEPTOR-LIKE PROTEIN KINASE-like 2.3 (620 aa).

An N-terminal signal peptide occupies residues 1-30; sequence MDSLSSMGFQTASFFLILLFLFYHLPCVPS. Residues 31–256 lie on the Extracellular side of the membrane; it reads QQERSRLCKP…NNGTYSDNRP (226 aa). Residues Asn-75, Asn-85, Asn-93, Asn-132, Asn-148, Asn-162, Asn-189, Asn-231, and Asn-248 are each glycosylated (N-linked (GlcNAc...) asparagine). A helical transmembrane segment spans residues 257–277; it reads FLVTIGTVLGSILCVCVVLFL. Over 278-620 the chain is Cytoplasmic; sequence AFYLNERRIA…SVESSIYSEV (343 aa). Positions 314 to 596 constitute a Protein kinase domain; sequence KSFTEVVGRG…SLDPPPKPLL (283 aa). Residues 320–328 and Lys-342 each bind ATP; that span reads VGRGGFGTV. Catalysis depends on Asp-431, which acts as the Proton acceptor. The disordered stretch occupies residues 586–620; the sequence is DSLDPPPKPLLHMPMQNNNAESSQLSVESSIYSEV. The segment covering 600 to 620 has biased composition (polar residues); sequence MQNNNAESSQLSVESSIYSEV.

The protein belongs to the protein kinase superfamily. Ser/Thr protein kinase family.

Its subcellular location is the membrane. The enzyme catalyses L-seryl-[protein] + ATP = O-phospho-L-seryl-[protein] + ADP + H(+). The catalysed reaction is L-threonyl-[protein] + ATP = O-phospho-L-threonyl-[protein] + ADP + H(+). The sequence is that of LEAF RUST 10 DISEASE-RESISTANCE LOCUS RECEPTOR-LIKE PROTEIN KINASE-like 2.3 from Arabidopsis thaliana (Mouse-ear cress).